Reading from the N-terminus, the 744-residue chain is Deleted in azoospermia protein 1 (744 aa).

Over residues 1–10 (MSAANPETPN) the composition is skewed to polar residues. A disordered region spans residues 1 to 27 (MSAANPETPNSTISREASTQSSSAAAS). The segment covering 11–27 (STISREASTQSSSAAAS) has biased composition (low complexity). One can recognise an RRM 1 domain in the interval 40 to 115 (NTVFVGGIDA…KKLKLGPAIR (76 aa)). Positions 163-175 (QHVQSAANPETPN) are enriched in polar residues. Residues 163–192 (QHVQSAANPETPNSTISREASTQSSSAAAS) form a disordered region. Over residues 176-192 (STISREASTQSSSAAAS) the composition is skewed to low complexity. An RRM 2 domain is found at 205–280 (NTVFVGGIDA…KKLKLGPAIR (76 aa)). The segment covering 328–340 (QHVQSAANPETPN) has biased composition (polar residues). A disordered region spans residues 328 to 357 (QHVQSAANPETPNSTISREASTQSSSAAAS). A compositionally biased stretch (low complexity) spans 341–357 (STISREASTQSSSAAAS). The RRM 3 domain maps to 370–445 (NTVFVGGIDA…KKLKLGPAIR (76 aa)). DAZ domains follow at residues 497 to 520 (AYSAYPHSPGQVITGCQLLVYNYQ), 521 to 544 (EYPTYPDSAFQVTTGYQLPVYNYQ), 545 to 568 (PFPAYPRSPFQVTAGYQLPVYNYQ), 569 to 592 (AFPAYPNSPFQVATGYQFPVYNYQ), 593 to 616 (PFPAYPSSPFQVTAGYQLPVYNYQ), 617 to 640 (AFPAYPNSPFQVATGYQFPVYNYQ), 641 to 664 (AFPAYPNSPVQVTTGYQLPVYNYQ), 665 to 688 (AFPAYPSSPFQVTTGYQLPVYNYQ), and 689 to 712 (AFPAYPNSAVQVTTGYQFHVYNYQ).

It belongs to the RRM DAZ family. In terms of assembly, forms a heterodimer with BOLL and DAZL. Interacts with PUM2, DAZAP1, DAZAP2, DZIP1 and DZIP3. As to expression, testis-specific. Expression restricted to premeiotic germ cells, particularly in spermatogonia (at protein level).

The protein resides in the cytoplasm. The protein localises to the nucleus. Its function is as follows. RNA-binding protein that plays an essential role in spermatogenesis. May act by binding to the 3'-UTR of mRNAs and regulating their translation. Promotes germ-cell progression to meiosis and formation of haploid germ cells. The sequence is that of Deleted in azoospermia protein 1 (DAZ1) from Homo sapiens (Human).